We begin with the raw amino-acid sequence, 85 residues long: N.vectensis toxin 1 6 (85 aa).

The signal sequence occupies residues 1–20; sequence MASFKIVIVCLALLVAVACA. Positions 21–36 are excised as a propeptide; the sequence is RRRDMMSDDELDYHYS. 3 disulfides stabilise this stretch: Cys42/Cys82, Cys44/Cys72, and Cys65/Cys83.

This sequence belongs to the sea anemone sodium channel inhibitory toxin family. Type II subfamily. As to expression, expressed in ectodermal glands and in clumps outside of the extodermal layer. Is not expressed in nematocytes. In adult female tissues, shows similar expression levels in mesenteries (gametes-producing tissue), tentacles, pharynx and physa.

The protein localises to the secreted. Its function is as follows. Binds to site 3 of voltage-gated sodium channels and inhibits the inactivation process. Is highly active on DmNav1/TipE (drosophila) and is only extremely weakly active on rat Nav1.4-beta-1/SCN4A-SCN1B, and on human Nav1.5-beta-1/SCN5A-beta-1. This reveals high specificity for arthropod over mammalian channels. In vivo, when released into the medium, this recombinant toxin induces impaired swimming, paralysis and death of the crustacean A.nauplii within several hours. Also causes paralysis of cherry shrimps immediately after injection at very low doses. Its effect on zebrafish (D.rerio) larvae is also rapid, since it induces tail twitching accompanied by impaired swimming after 20 minutes and complete paralysis within 45 minutes. It has also been observed to cause death of zebrafish larvae within 1 hour. The sequence is that of N.vectensis toxin 1 6 from Nematostella vectensis (Starlet sea anemone).